The primary structure comprises 778 residues: Double zinc ribbon and ankyrin repeat-containing protein 1 (778 aa).

Phosphoserine occurs at positions 179 and 201. 2 consecutive DZANK-type zinc fingers follow at residues 230-289 (CAHC…CVVC) and 359-407 (CSRC…GSCG). 2 ANK repeats span residues 631–662 (ENKL…DPNC) and 666–695 (QGRP…DIDQ). Position 768 is a phosphoserine (Ser768).

In terms of assembly, interacts with NINL. Associates with DYNC1H1 and multiple dynein intermediate and light chains as well as actin-binding proteins.

Its subcellular location is the cytoplasm. The protein localises to the cytoskeleton. It localises to the microtubule organizing center. It is found in the centrosome. The protein resides in the cilium basal body. Its function is as follows. Involved in vesicle transport in photoreceptor cells. The protein is Double zinc ribbon and ankyrin repeat-containing protein 1 (Dzank1) of Mus musculus (Mouse).